The sequence spans 193 residues: Putative F-box protein At1g31072 (193 aa).

The 50-residue stretch at 4 to 53 folds into the F-box domain; it reads EKTLDSIPIDVFLDIFSRLPAKSVGRSCCVSNRWASILGSQDFKELFLTM.

The sequence is that of Putative F-box protein At1g31072 from Arabidopsis thaliana (Mouse-ear cress).